The sequence spans 152 residues: Ubiquitin-conjugating enzyme E2 B (152 aa).

One can recognise a UBC core domain in the interval 4–150; sequence PARRRLMRDF…VSAIVEQSWN (147 aa). The Glycyl thioester intermediate role is filled by Cys-88.

It belongs to the ubiquitin-conjugating enzyme family. As to quaternary structure, interacts with RAD18, UBR2 and WAC.

It is found in the cell membrane. It localises to the nucleus. It carries out the reaction S-ubiquitinyl-[E1 ubiquitin-activating enzyme]-L-cysteine + [E2 ubiquitin-conjugating enzyme]-L-cysteine = [E1 ubiquitin-activating enzyme]-L-cysteine + S-ubiquitinyl-[E2 ubiquitin-conjugating enzyme]-L-cysteine.. It participates in protein modification; protein ubiquitination. Functionally, E2 ubiquitin-conjugating enzyme that accepts ubiquitin from the ubiquitin-activating enzyme E1 and transfers it to a E3 ubiquitin-protein ligase. In vitro catalyzes 'Lys-11'-, as well as 'Lys-48'- and 'Lys-63'-linked polyubiquitination. Together with the E3 enzyme BRE1 (RNF20 and/or RNF40), plays a role in transcription regulation by catalyzing the monoubiquitination of histone H2B at 'Lys-120' to form H2BK120ub1. H2BK120ub1 gives a specific tag for epigenetic transcriptional activation, elongation by RNA polymerase II, telomeric silencing, and is also a prerequisite for H3K4me and H3K79me formation. May play a role in DNA repair. Associates to the E3 ligase RAD18 to form the UBE2B-RAD18 ubiquitin ligase complex involved in mono-ubiquitination of DNA-associated PCNA on 'Lys-164'. In association with the E3 enzyme UBR4, is involved in N-end rule-dependent protein degradation. May be involved in neurite outgrowth. The polypeptide is Ubiquitin-conjugating enzyme E2 B (UBE2B) (Bos taurus (Bovine)).